The following is a 196-amino-acid chain: Probable malonic semialdehyde reductase RutE (196 aa).

The protein belongs to the nitroreductase family. HadB/RutE subfamily. It depends on FMN as a cofactor.

The catalysed reaction is 3-hydroxypropanoate + NADP(+) = 3-oxopropanoate + NADPH + H(+). Its function is as follows. May reduce toxic product malonic semialdehyde to 3-hydroxypropionic acid, which is excreted. The sequence is that of Probable malonic semialdehyde reductase RutE from Enterobacter sp. (strain 638).